The chain runs to 397 residues: RNA binding protein fox-1 homolog 1 (397 aa).

Residues 1-121 form a disordered region; that stretch reads MNCEREQLRG…NKSQPKRLHV (121 aa). The segment covering 70–87 has biased composition (polar residues); the sequence is QTHSEQSPADTSAQTVSG. Low complexity predominate over residues 88–99; that stretch reads TATQTDDAAPTD. Residues 100–113 are compositionally biased toward polar residues; that stretch reads GQPQTQPSENTENK. The region spanning 117 to 193 is the RRM domain; it reads KRLHVSNIPF…RKIEVNNATA (77 aa). At Arg317 the chain carries Asymmetric dimethylarginine. An Omega-N-methylarginine modification is found at Arg388.

As to quaternary structure, binds to the C-terminus of ATXN2. As to expression, predominantly expressed in muscle and brain.

The protein resides in the nucleus. It localises to the cytoplasm. Its function is as follows. RNA-binding protein that regulates alternative splicing events by binding to 5'-UGCAUGU-3' elements. Regulates alternative splicing of tissue-specific exons and of differentially spliced exons during erythropoiesis. The chain is RNA binding protein fox-1 homolog 1 (RBFOX1) from Homo sapiens (Human).